Here is a 390-residue protein sequence, read N- to C-terminus: O-phospho-L-seryl-tRNA:Cys-tRNA synthase 2 (390 aa).

Pyridoxal 5'-phosphate is bound by residues 83 to 84, Asn-187, and 210 to 212; these read AR and SGH. N6-(pyridoxal phosphate)lysine is present on Lys-213.

This sequence belongs to the SepCysS family. As to quaternary structure, homodimer. Interacts with SepRS. Requires pyridoxal 5'-phosphate as cofactor.

The enzyme catalyses O-phospho-L-seryl-tRNA(Cys) + hydrogen sulfide + H(+) = L-cysteinyl-tRNA(Cys) + phosphate. Converts O-phospho-L-seryl-tRNA(Cys) (Sep-tRNA(Cys)) to L-cysteinyl-tRNA(Cys) (Cys-tRNA(Cys)). The chain is O-phospho-L-seryl-tRNA:Cys-tRNA synthase 2 from Archaeoglobus fulgidus (strain ATCC 49558 / DSM 4304 / JCM 9628 / NBRC 100126 / VC-16).